A 314-amino-acid polypeptide reads, in one-letter code: MPRKIILDCDPGIDDAVAIFLAHGNPEIELLAITTVVGNQSLEKVTQNARLVADVAGIVGVPVAAGCTKPLVRGVRNASHIHGETGMGNVSYPPEFKTKLDGRHAVQLIIDLIMSHEPKTITLVPTGGLTNIAMAVRLEPRIVDRVKEVVLMGGGYHTGNASPVAEFNVFIDPEAAHIVFNESWNVTMVGLDLTHQALATPAVQKRVREVGTKPAAFMLQILDFYTKVYEKEHDTYGKVHDPCAVAYVIDPTVMTTERVPVDIELNGALTTGMTVVDFRYPRPKNCRTQVAVKLDFDKFWCLVIDALERIGDPQ.

Residue Asp-10 coordinates Ca(2+). Substrate is bound at residue Asp-14. The Ca(2+) site is built by Asp-15 and Thr-126. Residues Asn-160, Glu-166, and Asn-168 each coordinate substrate. His-240 functions as the Proton donor in the catalytic mechanism. A Ca(2+)-binding site is contributed by Asp-241.

This sequence belongs to the IUNH family. Homotetramer. It depends on Ca(2+) as a cofactor.

The enzyme catalyses inosine + H2O = hypoxanthine + D-ribose. It catalyses the reaction uridine + H2O = D-ribose + uracil. It functions in the pathway purine metabolism; purine nucleoside salvage. Its activity is regulated as follows. Is potently inhibited by immucillin A and immucillin ACAP, which are transition state inhibitors. Functionally, catalyzes the hydrolysis of the N-glycosidic bond of all of the commonly occurring purine and pyrimidine nucleosides into ribose and the associated base, but has a preference for inosine and uridine as substrates. Likely functions in purine salvage from the host, a fundamental pathway since protozoan parasites such as L.major are incapable of de novo purine biosynthesis. The sequence is that of Inosine-uridine preferring nucleoside hydrolase (NSNH) from Leishmania major.